The sequence spans 291 residues: Arabinogalactan O-methyltransferase 2 (291 aa).

A helical transmembrane segment spans residues 18–38 (WFLAVALAGLIGGAMLITSFI).

This sequence belongs to the methyltransferase superfamily.

The protein localises to the golgi apparatus membrane. In terms of biological role, involved in the methylation of glucuronic acid of different plant cell wall component, but mainly on side chains of arabinogalactans. In Arabidopsis thaliana (Mouse-ear cress), this protein is Arabinogalactan O-methyltransferase 2.